A 266-amino-acid chain; its full sequence is Protein-ADP-ribose hydrolase (266 aa).

The 192-residue stretch at 74–265 (TDLKDLKPIK…LYKEAFNRDA (192 aa)) folds into the Macro domain. ADP-D-ribose is bound by residues aspartate 93, isoleucine 94, and asparagine 107. Zn(2+) contacts are provided by cysteine 113, histidine 118, and cysteine 120. ADP-D-ribose is bound by residues cysteine 120, isoleucine 121, aspartate 122, serine 212, threonine 213, glycine 214, and phenylalanine 216.

Belongs to the MacroD-type family. Zn-Macro subfamily. Zn(2+) serves as cofactor.

It carries out the reaction 4-O-(ADP-D-ribosyl)-L-aspartyl-[protein] + H2O = L-aspartyl-[protein] + ADP-D-ribose + H(+). ADP-ribosylhydrolase that specifically reverses the SirTM-mediated mono-ADP-ribosylation at an asparatate residue of GcvH-L, by releasing ADP-ribose from the target protein. May play a role in the regulation of the response to host-induced oxidative stress. This is Protein-ADP-ribose hydrolase from Staphylococcus aureus (strain COL).